A 940-amino-acid polypeptide reads, in one-letter code: UvrABC system protein A (940 aa).

Residue 33 to 40 (GVSGSGKS) participates in ATP binding. The segment at 252 to 279 (CPVCGFTVPELEPRLFSFNAPFGSCPDC) adopts a C4-type zinc-finger fold. ABC transporter domains lie at 309 to 586 (WYGK…KKSL) and 606 to 935 (IDKK…QYLK). Position 639 to 646 (639 to 646 (GVSGSGKS)) interacts with ATP. The segment at 738–764 (CEACSGDGIIKIEMHFLPDVYVPCEVC) adopts a C4-type zinc-finger fold.

The protein belongs to the ABC transporter superfamily. UvrA family. Forms a heterotetramer with UvrB during the search for lesions.

Its subcellular location is the cytoplasm. Its function is as follows. The UvrABC repair system catalyzes the recognition and processing of DNA lesions. UvrA is an ATPase and a DNA-binding protein. A damage recognition complex composed of 2 UvrA and 2 UvrB subunits scans DNA for abnormalities. When the presence of a lesion has been verified by UvrB, the UvrA molecules dissociate. The sequence is that of UvrABC system protein A from Lactococcus lactis subsp. lactis (strain IL1403) (Streptococcus lactis).